Reading from the N-terminus, the 113-residue chain is Protein RALF-like 31 (113 aa).

A signal peptide spans 1 to 21 (MFNSTALVIFAILFLLISADA). Positions 22–58 (FPIPSPNGEIDAMLIRNSIIGEDEDLMPTEISRRVLM) are cleaved as a propeptide — removed in mature form. Cystine bridges form between cysteine 76/cysteine 86 and cysteine 98/cysteine 104.

It belongs to the plant rapid alkalinization factor (RALF) family. Proteolytically cleaved, probably by S1P, a subtilisin-like serine protease (subtilase).

Its subcellular location is the secreted. Cell signaling peptide that may regulate plant stress, growth, and development. Mediates a rapid alkalinization of extracellular space by mediating a transient increase in the cytoplasmic Ca(2+) concentration leading to a calcium-dependent signaling events through a cell surface receptor and a concomitant activation of some intracellular mitogen-activated protein kinases. This Arabidopsis thaliana (Mouse-ear cress) protein is Protein RALF-like 31 (RALFL31).